The sequence spans 596 residues: Elongation factor 4 (596 aa).

One can recognise a tr-type G domain in the interval Lys-2 to Asn-183. Residues Asp-14 to Thr-19 and Asn-130 to Asp-133 contribute to the GTP site.

This sequence belongs to the TRAFAC class translation factor GTPase superfamily. Classic translation factor GTPase family. LepA subfamily.

It localises to the cell inner membrane. It carries out the reaction GTP + H2O = GDP + phosphate + H(+). Functionally, required for accurate and efficient protein synthesis under certain stress conditions. May act as a fidelity factor of the translation reaction, by catalyzing a one-codon backward translocation of tRNAs on improperly translocated ribosomes. Back-translocation proceeds from a post-translocation (POST) complex to a pre-translocation (PRE) complex, thus giving elongation factor G a second chance to translocate the tRNAs correctly. Binds to ribosomes in a GTP-dependent manner. In Campylobacter concisus (strain 13826), this protein is Elongation factor 4.